A 1524-amino-acid polypeptide reads, in one-letter code: Protein dispatched homolog 1 (1524 aa).

A glycan (N-linked (GlcNAc...) asparagine) is linked at Asn-59. 4 consecutive transmembrane segments (helical) span residues 190-210 (VVVLGMCTMFIVVCALVGVLV), 500-520 (LLMDTVYPAIAIVIVLLVMCV), 525-545 (MFITLMTMFAIISSLIVSYFL), and 549-569 (VFHFEFFPFMNLTALIILVGI). In terms of domain architecture, SSD spans 486–658 (GIEFGIKHSL…VTWLPAVVVL (173 aa)). Residue Asn-582 is glycosylated (N-linked (GlcNAc...) asparagine). 8 helical membrane-spanning segments follow: residues 604–624 (AALSMFVTSFTTAAAFYANYV), 638–658 (GTAILVNYVLMVTWLPAVVVL), 719–739 (YLWLFWFLALTVGGAYIVCIN), 988–1008 (MGLSVAVAFSVMLLTTWNIII), 1010–1030 (LYAIISIAGTIFVTVGSLVLL), 1040–1060 (VTISVAVGLSVDFAVHYGVAY), 1079–1099 (VGSAMAMAALTTFVAGAMMMP), and 1107–1127 (QLGTFMMLIMCISWAFATFFF).

The protein belongs to the dispatched family. In terms of assembly, interacts with SHH via the cholesterol anchor of the dually lipid-modified SHH (ShhNp).

The protein localises to the membrane. In terms of biological role, functions in hedgehog (Hh) signaling. Regulates the release and extracellular accumulation of cholesterol-modified hedgehog proteins and is hence required for effective production of the Hh signal. Synergizes with SCUBE2 to cause an increase in SHH secretion. This chain is Protein dispatched homolog 1 (DISP1), found in Homo sapiens (Human).